The primary structure comprises 129 residues: Small ribosomal subunit protein uS9 (129 aa).

The protein belongs to the universal ribosomal protein uS9 family.

This chain is Small ribosomal subunit protein uS9, found in Helicobacter pylori (strain Shi470).